The following is a 502-amino-acid chain: UTP--glucose-1-phosphate uridylyltransferase 2 (502 aa).

The disordered stretch occupies residues 1–20 (MMKPDLNSPLPQSPQLQAFG). A compositionally biased stretch (polar residues) spans 9–20 (PLPQSPQLQAFG). UTP-binding positions include 114–117 (LNGG), K128, Q191, and G220. 116–117 (GG) is a binding site for substrate. Residues H221 and 249 to 251 (NVD) contribute to the substrate site. 2 residues coordinate UTP: D251 and K390.

It belongs to the UDPGP type 1 family.

The enzyme catalyses alpha-D-glucose 1-phosphate + UTP + H(+) = UDP-alpha-D-glucose + diphosphate. Its function is as follows. Plays a central role as a glucosyl donor in cellular metabolic pathways. The sequence is that of UTP--glucose-1-phosphate uridylyltransferase 2 (ugpB) from Dictyostelium discoideum (Social amoeba).